Consider the following 269-residue polypeptide: HTH-type transcriptional activator ArnR (269 aa).

The Cytoplasmic portion of the chain corresponds to 1–218 (MTKSLFDVLK…LLRLTNSYTL (218 aa)). The segment at residues 39–62 (TTEISQTINTSRKSIIDAIRKLVD) is a DNA-binding region (H-T-H motif). Residues 219 to 239 (EMANVKVMGFILISLPLLMYF) traverse the membrane as a helical segment. Residues 240 to 242 (RDQ) are Extracellular-facing. Residues 243–263 (LGLIELPWLYAVIFLALLSVF) traverse the membrane as a helical segment. The Cytoplasmic segment spans residues 264 to 269 (AQILSR).

The protein localises to the cell membrane. Functionally, involved in regulation of archaellar gene expression. Activates flaB transcription upon nutrient starvation by acting on the flaB promoter. The protein is HTH-type transcriptional activator ArnR of Sulfolobus acidocaldarius (strain ATCC 33909 / DSM 639 / JCM 8929 / NBRC 15157 / NCIMB 11770).